A 405-amino-acid polypeptide reads, in one-letter code: Putative aminotransferase AatC (405 aa).

An N6-(pyridoxal phosphate)lysine modification is found at Lys-238.

Belongs to the class-I pyridoxal-phosphate-dependent aminotransferase family. Homodimer. The cofactor is pyridoxal 5'-phosphate.

The protein localises to the cytoplasm. In Rhizobium meliloti (strain 1021) (Ensifer meliloti), this protein is Putative aminotransferase AatC (aatC).